A 216-amino-acid chain; its full sequence is Endoplasmic reticulum vesicle protein 25 (216 aa).

The signal sequence occupies residues 1-20 (MASLKSLLSGFLLLAGAAQA). Residues 21 to 185 (LKFDLEATSS…TNESTNNRVK (165 aa)) lie on the Lumenal side of the membrane. The region spanning 36–126 (RRCIRNFVNK…RRHVELDIDI (91 aa)) is the GOLD domain. Residues 186 to 206 (WFGMATTFLLIALWGWQIMYL) traverse the membrane as a helical segment. At 207-216 (RAYFRSKHLI) the chain is on the cytoplasmic side.

Belongs to the EMP24/GP25L family.

The protein localises to the endoplasmic reticulum membrane. Its subcellular location is the golgi apparatus membrane. Functionally, constituent of COPII-coated endoplasmic reticulum-derived transport vesicles. Required for efficient transport of a subset of secretory proteins to the Golgi. Facilitates retrograde transport from the Golgi to the endoplasmic reticulum. This is Endoplasmic reticulum vesicle protein 25 (erv-1) from Neurospora crassa (strain ATCC 24698 / 74-OR23-1A / CBS 708.71 / DSM 1257 / FGSC 987).